Consider the following 46-residue polypeptide: Iota-conotoxin-like Fi11.8 (46 aa).

4-hydroxyproline is present on residues Pro2 and Pro11. Disulfide bonds link Cys5/Cys19, Cys12/Cys22, Cys18/Cys27, and Cys21/Cys38. Pro29 bears the 4-hydroxyproline mark. 6'-bromotryptophan is present on Trp33. Phe44 carries the D-phenylalanine modification.

Belongs to the conotoxin I1 superfamily. Expressed by the venom duct.

It is found in the secreted. Its function is as follows. Iota-conotoxins bind to voltage-gated sodium channels (Nav) and act as agonists by shifting the voltage-dependence of activation to more hyperpolarized levels. Produces general excitatory symptoms. The sequence is that of Iota-conotoxin-like Fi11.8 from Conus figulinus (Fig cone).